The following is a 221-amino-acid chain: ATP phosphoribosyltransferase (221 aa).

This sequence belongs to the ATP phosphoribosyltransferase family. Short subfamily. As to quaternary structure, heteromultimer composed of HisG and HisZ subunits.

The protein resides in the cytoplasm. The enzyme catalyses 1-(5-phospho-beta-D-ribosyl)-ATP + diphosphate = 5-phospho-alpha-D-ribose 1-diphosphate + ATP. Its pathway is amino-acid biosynthesis; L-histidine biosynthesis; L-histidine from 5-phospho-alpha-D-ribose 1-diphosphate: step 1/9. Catalyzes the condensation of ATP and 5-phosphoribose 1-diphosphate to form N'-(5'-phosphoribosyl)-ATP (PR-ATP). Has a crucial role in the pathway because the rate of histidine biosynthesis seems to be controlled primarily by regulation of HisG enzymatic activity. This is ATP phosphoribosyltransferase from Rhizorhabdus wittichii (strain DSM 6014 / CCUG 31198 / JCM 15750 / NBRC 105917 / EY 4224 / RW1) (Sphingomonas wittichii).